The chain runs to 144 residues: Maximins 3/H11 type 1 (144 aa).

The first 18 residues, 1–18 (MNFKYIVAVSFLIASAYA), serve as a signal peptide directing secretion. 2 consecutive propeptides follow at residues 19–43 (RSVQ…REIR) and 73–122 (RTAE…KKEK). An Isoleucine amide modification is found at isoleucine 143.

It belongs to the bombinin family. As to expression, expressed by the skin glands.

It localises to the secreted. In terms of biological role, maximin-3 shows antibacterial activity against both Gram-positive and Gram-negative bacteria. It also shows antimicrobial activity against the fungus C.albicans, but not against A.flavus nor P.uticale. It has little hemolytic activity. It possess a significant cytotoxicity against tumor cell lines. It possess a significant anti-HIV activity. It shows high spermicidal activity. Maximin-H11 shows antimicrobial activity against bacteria and against the fungus C.albicans. Shows strong hemolytic activity. In Bombina maxima (Giant fire-bellied toad), this protein is Maximins 3/H11 type 1.